A 582-amino-acid chain; its full sequence is 2-succinyl-5-enolpyruvyl-6-hydroxy-3-cyclohexene-1-carboxylate synthase (582 aa).

This sequence belongs to the TPP enzyme family. MenD subfamily. In terms of assembly, homodimer. Mg(2+) is required as a cofactor. Mn(2+) serves as cofactor. The cofactor is thiamine diphosphate.

The catalysed reaction is isochorismate + 2-oxoglutarate + H(+) = 5-enolpyruvoyl-6-hydroxy-2-succinyl-cyclohex-3-ene-1-carboxylate + CO2. Its pathway is quinol/quinone metabolism; 1,4-dihydroxy-2-naphthoate biosynthesis; 1,4-dihydroxy-2-naphthoate from chorismate: step 2/7. The protein operates within cofactor biosynthesis; phylloquinone biosynthesis. Functionally, catalyzes the thiamine diphosphate-dependent decarboxylation of 2-oxoglutarate and the subsequent addition of the resulting succinic semialdehyde-thiamine pyrophosphate anion to isochorismate to yield 2-succinyl-5-enolpyruvyl-6-hydroxy-3-cyclohexene-1-carboxylate (SEPHCHC). The polypeptide is 2-succinyl-5-enolpyruvyl-6-hydroxy-3-cyclohexene-1-carboxylate synthase (Trichodesmium erythraeum (strain IMS101)).